Here is a 587-residue protein sequence, read N- to C-terminus: MDTVKERVLAPGKEKMRNLAGKTLGHMHRVMERKQKTGEVIELTEDGRPMHMPEKKAPLVDCTCFGLPRRYIIAIMSGLGFCISFGIRCNLGVAIVDMVNNSTIHKGGKIIIKGKAKFNWDPETVGMIHGSFFWGYTVTQIPGGYISSRLAANRVFGAAILLTSTLNMFIPSAARVHYGCVMFVRILQGLVEGVTYPACHGIWSKWAPPLERSRLATTSFCGSYAGAVVAMPLAGILVQYSGWSSVFYIYGSFGIVWYMFWILVSYESPADHPTITDEERTYIEESIGESAKLLGAMEKYKTPWRKFFTSMPVYAIIVANFCRSWTFYLLLISQPAYFEEVFGFEISKVGMVSALPHLVMTIIVPIGGQLADYLRSKNILTTTTVRKIMNCGGFGMEATLLLVVGFSHSKGVAISFLVLAVGFSGFAISGFNVNHLDIAPRYASILMGISNGVGTLSGMVCPLIVGAMTKNKTREEWQNVFLIASLVHYGGVIFYGIFASGEKQPWADPEETSDEKCGFIDEDELAEETGDITLSHAPFGAQGALGAPAKTYGATTQLNGGWAKGWEKTEEFIQEDAERTYTGDGYS.

Over 1–71 the chain is Cytoplasmic; sequence MDTVKERVLA…CTCFGLPRRY (71 aa). Residues 72–92 traverse the membrane as a helical segment; it reads IIAIMSGLGFCISFGIRCNLG. Over 93–125 the chain is Vesicular; it reads VAIVDMVNNSTIHKGGKIIIKGKAKFNWDPETV. Residues asparagine 100 and asparagine 101 are each glycosylated (N-linked (GlcNAc...) asparagine). A helical membrane pass occupies residues 126–146; it reads GMIHGSFFWGYTVTQIPGGYI. At 147–149 the chain is on the cytoplasmic side; sequence SSR. The helical transmembrane segment at 150-170 threads the bilayer; it reads LAANRVFGAAILLTSTLNMFI. Residues 171-180 lie on the Vesicular side of the membrane; sequence PSAARVHYGC. The chain crosses the membrane as a helical span at residues 181–203; the sequence is VMFVRILQGLVEGVTYPACHGIW. Topologically, residues 204 to 217 are cytoplasmic; it reads SKWAPPLERSRLAT. Residues 218–238 form a helical membrane-spanning segment; that stretch reads TSFCGSYAGAVVAMPLAGILV. Residues 239 to 245 lie on the Vesicular side of the membrane; it reads QYSGWSS. Residues 246–266 traverse the membrane as a helical segment; that stretch reads VFYIYGSFGIVWYMFWILVSY. The Cytoplasmic portion of the chain corresponds to 267–311; it reads ESPADHPTITDEERTYIEESIGESAKLLGAMEKYKTPWRKFFTSM. Residues 312–332 traverse the membrane as a helical segment; it reads PVYAIIVANFCRSWTFYLLLI. At 333 to 350 the chain is on the vesicular side; that stretch reads SQPAYFEEVFGFEISKVG. Residues 351–371 form a helical membrane-spanning segment; sequence MVSALPHLVMTIIVPIGGQLA. At 372-387 the chain is on the cytoplasmic side; it reads DYLRSKNILTTTTVRK. The helical transmembrane segment at 388-408 threads the bilayer; the sequence is IMNCGGFGMEATLLLVVGFSH. Topologically, residues 409 to 410 are vesicular; that stretch reads SK. Residues 411–431 traverse the membrane as a helical segment; it reads GVAISFLVLAVGFSGFAISGF. At 432–444 the chain is on the cytoplasmic side; the sequence is NVNHLDIAPRYAS. A helical transmembrane segment spans residues 445 to 465; that stretch reads ILMGISNGVGTLSGMVCPLIV. Residues 466 to 479 lie on the Vesicular side of the membrane; the sequence is GAMTKNKTREEWQN. Asparagine 471 carries an N-linked (GlcNAc...) asparagine glycan. A helical membrane pass occupies residues 480–500; the sequence is VFLIASLVHYGGVIFYGIFAS. The Cytoplasmic segment spans residues 501–587; the sequence is GEKQPWADPE…ERTYTGDGYS (87 aa).

This sequence belongs to the major facilitator superfamily. Sodium/anion cotransporter family. VGLUT subfamily. As to expression, expressed in spinal cord.

It is found in the cytoplasmic vesicle. The protein localises to the secretory vesicle. It localises to the synaptic vesicle membrane. The protein resides in the membrane. Its subcellular location is the synapse. It is found in the synaptosome. The protein localises to the cell membrane. The enzyme catalyses L-glutamate(out) = L-glutamate(in). It carries out the reaction 3 Na(+)(out) + phosphate(out) = 3 Na(+)(in) + phosphate(in). The catalysed reaction is phosphate(in) = phosphate(out). It catalyses the reaction K(+)(in) + H(+)(out) = K(+)(out) + H(+)(in). The enzyme catalyses chloride(in) = chloride(out). With respect to regulation, chloride channel activity is allosterically activated by lumenal H(+) and Cl(-) leading to synaptic vesicles acidification. The L-glutamate transport activity is allosterically activated by lumenal H(+) and Cl(-). The allosteric requirement for H(+) efficiently prevents non-vesicular efflux across the plasma membrane. The L-glutamate uniporter activity exhibits a biphasic dependence on chloride concentration. Functionally, multifunctional transporter that transports L-glutamate as well as multiple ions such as chloride, proton, potassium, sodium and phosphate. At the synaptic vesicle membrane, mainly functions as a uniporter which transports preferentially L-glutamate but also, phosphate from the cytoplasm into synaptic vesicles at presynaptic nerve terminals of excitatory neural cells. The L-glutamate or phosphate uniporter activity is electrogenic and is driven by the proton electrochemical gradient, mainly by the electrical gradient established by the vacuolar H(+)-ATPase across the synaptic vesicle membrane. In addition, functions as a chloride channel that allows a chloride permeation through the synaptic vesicle membrane therefore affects the proton electrochemical gradient and promotes synaptic vesicles acidification. Moreover, functions as a vesicular K(+)/H(+) antiport allowing to maintain the electrical gradient and to decrease chemical gradient and therefore sustain vesicular L-glutamate uptake. The vesicular H(+)/H(+) antiport activity is electroneutral. At the plasma membrane, following exocytosis, functions as a symporter of Na(+) and phosphate from the extracellular space to the cytoplasm allowing synaptic phosphate homeostasis regulation. The symporter activity is driven by an inside negative membrane potential and is electrogenic. Also involved in the regulation of retinal hyaloid vessel regression during postnatal development. May also play a role in the endocrine L-glutamatergic system of other tissues such as pineal gland and pancreas. In Danio rerio (Zebrafish), this protein is Vesicular glutamate transporter 2.2 (slc17a6a).